The sequence spans 85 residues: MIMAKLKSAKGKKFLFGLLAVFIIAASVVTRATIGGVIEQYNIPLSEWTTSMYVIQSSMIFVYSLVFTVLLAIPLGIYFLGGEEQ.

The next 2 membrane-spanning stretches (helical) occupy residues 14–34 and 60–80; these read FLFG…RATI and IFVY…IYFL.

It localises to the cell membrane. This is an uncharacterized protein from Escherichia coli O157:H7.